The primary structure comprises 462 residues: Argininosuccinate lyase (462 aa).

It belongs to the lyase 1 family. Argininosuccinate lyase subfamily.

The protein localises to the cytoplasm. The enzyme catalyses 2-(N(omega)-L-arginino)succinate = fumarate + L-arginine. The protein operates within amino-acid biosynthesis; L-arginine biosynthesis; L-arginine from L-ornithine and carbamoyl phosphate: step 3/3. The sequence is that of Argininosuccinate lyase from Pelagibacter ubique (strain HTCC1062).